Reading from the N-terminus, the 223-residue chain is Acetate CoA-transferase subunit beta (223 aa).

Residue glutamate 46 is part of the active site.

The protein belongs to the 3-oxoacid CoA-transferase subunit B family. As to quaternary structure, heterotetramer composed of two alpha subunits (AtoD) and two beta subunits (AtoA).

The catalysed reaction is an acyl-CoA + acetate = a carboxylate + acetyl-CoA. It carries out the reaction acetoacetate + acetyl-CoA = acetoacetyl-CoA + acetate. The protein operates within lipid metabolism; short-chain fatty acid metabolism. Coenzyme A transferase which is involved in short-chain fatty acid degradation and catalyzes the activation of short-chain fatty acids to their respective CoA thiolesters. The chain is Acetate CoA-transferase subunit beta (atoA) from Haemophilus influenzae (strain ATCC 51907 / DSM 11121 / KW20 / Rd).